Reading from the N-terminus, the 221-residue chain is ATP phosphoribosyltransferase (221 aa).

It belongs to the ATP phosphoribosyltransferase family. Short subfamily. As to quaternary structure, heteromultimer composed of HisG and HisZ subunits.

The protein localises to the cytoplasm. It carries out the reaction 1-(5-phospho-beta-D-ribosyl)-ATP + diphosphate = 5-phospho-alpha-D-ribose 1-diphosphate + ATP. The protein operates within amino-acid biosynthesis; L-histidine biosynthesis; L-histidine from 5-phospho-alpha-D-ribose 1-diphosphate: step 1/9. In terms of biological role, catalyzes the condensation of ATP and 5-phosphoribose 1-diphosphate to form N'-(5'-phosphoribosyl)-ATP (PR-ATP). Has a crucial role in the pathway because the rate of histidine biosynthesis seems to be controlled primarily by regulation of HisG enzymatic activity. The chain is ATP phosphoribosyltransferase from Rhizorhabdus wittichii (strain DSM 6014 / CCUG 31198 / JCM 15750 / NBRC 105917 / EY 4224 / RW1) (Sphingomonas wittichii).